A 98-amino-acid chain; its full sequence is PqqA binding protein (98 aa).

It belongs to the PqqD family. In terms of assembly, monomer. Interacts with PqqE.

It participates in cofactor biosynthesis; pyrroloquinoline quinone biosynthesis. Functionally, functions as a PqqA binding protein and presents PqqA to PqqE, in the pyrroloquinoline quinone (PQQ) biosynthetic pathway. The sequence is that of PqqA binding protein from Rhizobium meliloti (strain 1021) (Ensifer meliloti).